The following is a 491-amino-acid chain: Probable glycine dehydrogenase (decarboxylating) subunit 2 (491 aa).

Residue lysine 273 is modified to N6-(pyridoxal phosphate)lysine.

The protein belongs to the GcvP family. C-terminal subunit subfamily. In terms of assembly, the glycine cleavage system is composed of four proteins: P, T, L and H. In this organism, the P 'protein' is a heterodimer of two subunits. It depends on pyridoxal 5'-phosphate as a cofactor.

The enzyme catalyses N(6)-[(R)-lipoyl]-L-lysyl-[glycine-cleavage complex H protein] + glycine + H(+) = N(6)-[(R)-S(8)-aminomethyldihydrolipoyl]-L-lysyl-[glycine-cleavage complex H protein] + CO2. The glycine cleavage system catalyzes the degradation of glycine. The P protein binds the alpha-amino group of glycine through its pyridoxal phosphate cofactor; CO(2) is released and the remaining methylamine moiety is then transferred to the lipoamide cofactor of the H protein. This Bacillus cereus (strain G9842) protein is Probable glycine dehydrogenase (decarboxylating) subunit 2.